The primary structure comprises 299 residues: Bifunctional protein FolD 2 (299 aa).

NADP(+) contacts are provided by residues 168 to 170 (GRS), S193, and I234.

This sequence belongs to the tetrahydrofolate dehydrogenase/cyclohydrolase family. In terms of assembly, homodimer.

The catalysed reaction is (6R)-5,10-methylene-5,6,7,8-tetrahydrofolate + NADP(+) = (6R)-5,10-methenyltetrahydrofolate + NADPH. It carries out the reaction (6R)-5,10-methenyltetrahydrofolate + H2O = (6R)-10-formyltetrahydrofolate + H(+). Its pathway is one-carbon metabolism; tetrahydrofolate interconversion. Its function is as follows. Catalyzes the oxidation of 5,10-methylenetetrahydrofolate to 5,10-methenyltetrahydrofolate and then the hydrolysis of 5,10-methenyltetrahydrofolate to 10-formyltetrahydrofolate. The protein is Bifunctional protein FolD 2 of Rhizobium etli (strain ATCC 51251 / DSM 11541 / JCM 21823 / NBRC 15573 / CFN 42).